The sequence spans 491 residues: Glucose-6-phosphate exchanger SLC37A2 (491 aa).

A helical membrane pass occupies residues 5–25 (LAPGIWYRAFILLITFLIYTC). 3 N-linked (GlcNAc...) asparagine glycosylation sites follow: Asn-43, Asn-52, and Asn-58. 5 helical membrane-spanning segments follow: residues 78–98 (GAVD…SGIF), 108–130 (LTAG…FWNI), 132–154 (VLWY…WPAV), 169–189 (LIMG…SLLA), and 200–220 (SFVV…FFLI). Residues 229 to 257 (SPPQHHGNPEESQDQPEDPANGPSCNKES) are disordered. The next 6 membrane-spanning stretches (helical) occupy residues 292 to 312 (LCLL…PLYI), 328 to 348 (TLFD…SDYI), 352 to 372 (ATTC…YNHV), 377 to 397 (IGIS…PYAL), 424 to 444 (AIID…AGLI), and 452 to 472 (VFYM…RLVY).

It belongs to the major facilitator superfamily. Organophosphate:Pi antiporter (OPA) (TC 2.A.1.4) family.

The protein resides in the endoplasmic reticulum membrane. The enzyme catalyses D-glucose 6-phosphate(in) + phosphate(out) = D-glucose 6-phosphate(out) + phosphate(in). Its activity is regulated as follows. Inhibited by vanadate but not by chlorogenic acid. Functionally, inorganic phosphate and glucose-6-phosphate antiporter. May transport cytoplasmic glucose-6-phosphate into the lumen of the endoplasmic reticulum and translocate inorganic phosphate into the opposite direction. Independent of a lumenal glucose-6-phosphatase. May not play a role in homeostatic regulation of blood glucose levels. This Bos taurus (Bovine) protein is Glucose-6-phosphate exchanger SLC37A2.